Consider the following 172-residue polypeptide: Dehydratase cfoI (172 aa).

Residues H86 and H111 contribute to the active site.

It belongs to the scytalone dehydratase family. As to quaternary structure, homotrimer. Each subunit contains an active site, located in the central part of the hydrophobic core of the monomer, which functions independently.

The protein operates within secondary metabolite biosynthesis; flavonoid biosynthesis. Its function is as follows. Cytochrome P450 monooxygenase; part of the gene cluster that mediates the biosynthesis of chlorflavonin, a fungal flavonoid with acetolactate synthase inhibitory activity. Within the pathway, cfoI is responsible for the hydroxylation of the flavonoid skeleton at position C3 with cfoF. The pathway begins with the PKS-NRPS hybrid synthetase cfoA that uses benzoic acid or p-hydroxybenzoic acid as a starter unit with four rounds of chain elongation using malonyl-CoA to form the chalcone skeleton. Then, a new type of chalcone isomerase, cfoK, catalyzes the conversion of the chalcone into a flavanone by a histidine-mediated oxa-Michael addition mechanism. The desaturation of flavanone to flavone is catalyzed by a new type of flavone synthase, the flavin mononucleotide (FMN)-dependent oxidoreductase cfoJ. Monooxygenases cfoF, cfoG, and P450 cfoH are responsible for the hydroxylation of the flavonoid skeleton at sites C3, C8, and C2', respectively. Like cfoF, the dehydratase cfoI plays also a role in the hydroxylation of position C3. Methyltransferases cfoB, cfoC, and cfoD then catalyze the methylation of C7-OH, C8-OH, and C3-OH, respectively. Finally, the monooxygenase cfoE is responsible for the chlorination of flavonoid at position C3'. In Aspergillus candidus, this protein is Dehydratase cfoI.